The sequence spans 136 residues: Large ribosomal subunit protein uL16c (136 aa).

It belongs to the universal ribosomal protein uL16 family. As to quaternary structure, part of the 50S ribosomal subunit.

It is found in the plastid. Its subcellular location is the chloroplast. This is Large ribosomal subunit protein uL16c from Illicium oligandrum (Star anise).